We begin with the raw amino-acid sequence, 363 residues long: Chalcone synthase B (363 aa).

The active site involves Cys-170.

The protein belongs to the thiolase-like superfamily. Chalcone/stilbene synthases family.

It catalyses the reaction (E)-4-coumaroyl-CoA + 3 malonyl-CoA + 3 H(+) = 2',4,4',6'-tetrahydroxychalcone + 3 CO2 + 4 CoA. Its pathway is secondary metabolite biosynthesis; flavonoid biosynthesis. In terms of biological role, the primary product of this enzyme is 4,2',4',6'-tetrahydroxychalcone (also termed naringenin-chalcone or chalcone) which can under specific conditions spontaneously isomerize into naringenin. The sequence is that of Chalcone synthase B (CHSB) from Ipomoea nil (Japanese morning glory).